Reading from the N-terminus, the 542-residue chain is Chaperonin GroEL (542 aa).

ATP-binding positions include 29-32 (TLGP), lysine 50, 86-90 (DGTTT), glycine 413, 477-479 (NAA), and aspartate 493.

This sequence belongs to the chaperonin (HSP60) family. As to quaternary structure, forms a cylinder of 14 subunits composed of two heptameric rings stacked back-to-back. Interacts with the co-chaperonin GroES.

It is found in the cytoplasm. It carries out the reaction ATP + H2O + a folded polypeptide = ADP + phosphate + an unfolded polypeptide.. Together with its co-chaperonin GroES, plays an essential role in assisting protein folding. The GroEL-GroES system forms a nano-cage that allows encapsulation of the non-native substrate proteins and provides a physical environment optimized to promote and accelerate protein folding. This chain is Chaperonin GroEL, found in Solibacter usitatus (strain Ellin6076).